Reading from the N-terminus, the 714-residue chain is MEMASAFTLNVRLDNIAIITIDVPDEKMNTLKAEFASQVRAIIKQLRENKELRGVVFISAKPDNFIAGADINMIGNCKTAQEAEALARQGQQLMAEIHALPIPVIAAIHGACLGGGLELALACHGRVCTDDPKTVLGLPEVQLGLLPGSGGTQRLPRLIGVSTALEMILTGKQLRAKQALKLGLVDDVVPHSILLEAAVELAKKDRPSSRPLPVRERILAGPLGRALLFKMVGKKTEHKTQGNYPATERILEVVETGLAQGTSSGYDAEARAFGELAMTPQSQALRSIFFASTDVKKDPGSDAPPAPLNSVGILGGGLMGAGIAYVTACKAGLPVRIKDINPQGINHALKYSWDQLEGKVRRRHLKASERDKQLALISGTTDYRGFAHRDLIIEAVFENLELKQQMVAEVEQNCAAHTIFASNTSSLPIGDIAAHAARPEQVIGLHFFSPVEKMPLVEIIPHAGTSAQTIATTVKLAKKQGKTPIVVRDKAGFYVNRILAPYINEAIRMLTEGERVEHIDAALVKFGFPVGPIQLLDEVGIDTGTKIIPVLEAAYGERFSAPANVVSSILNDDRKGRKNGRGFYLYGQKGRKSKKQVDPAIYPLIGAQGQGRLSAPQVAERCVMLMLNEAVRCVDEQVIRSVRDGDIGAVFGIGFPPFLGGPFRYIDSLGAGEVVAIMQRLATQYGSRFTPCERLVEMGARGESFWKTTATDLQ.

The interval 1–190 (MEMASAFTLN…KLGLVDDVVP (190 aa)) is enoyl-CoA hydratase. Residues 306-714 (APLNSVGILG…FWKTTATDLQ (409 aa)) form a 3-hydroxyacyl-CoA dehydrogenase region.

In the N-terminal section; belongs to the enoyl-CoA hydratase/isomerase family. The protein in the central section; belongs to the 3-hydroxyacyl-CoA dehydrogenase family. In terms of assembly, heterotetramer of two alpha chains (FadJ) and two beta chains (FadI).

The protein localises to the cytoplasm. It carries out the reaction a (3S)-3-hydroxyacyl-CoA = a (2E)-enoyl-CoA + H2O. It catalyses the reaction a 4-saturated-(3S)-3-hydroxyacyl-CoA = a (3E)-enoyl-CoA + H2O. The catalysed reaction is a (3S)-3-hydroxyacyl-CoA + NAD(+) = a 3-oxoacyl-CoA + NADH + H(+). The enzyme catalyses (3S)-3-hydroxybutanoyl-CoA = (3R)-3-hydroxybutanoyl-CoA. It functions in the pathway lipid metabolism; fatty acid beta-oxidation. Functionally, catalyzes the formation of a hydroxyacyl-CoA by addition of water on enoyl-CoA. Also exhibits 3-hydroxyacyl-CoA epimerase and 3-hydroxyacyl-CoA dehydrogenase activities. In Escherichia coli O9:H4 (strain HS), this protein is Fatty acid oxidation complex subunit alpha.